Here is a 209-residue protein sequence, read N- to C-terminus: Thymidylate kinase (209 aa).

10–17 (GLDGAGKS) contributes to the ATP binding site.

The protein belongs to the thymidylate kinase family.

It catalyses the reaction dTMP + ATP = dTDP + ADP. In terms of biological role, phosphorylation of dTMP to form dTDP in both de novo and salvage pathways of dTTP synthesis. In Francisella tularensis subsp. novicida (strain U112), this protein is Thymidylate kinase.